A 417-amino-acid chain; its full sequence is Cysteate synthase (417 aa).

K104 is subject to N6-(pyridoxal phosphate)lysine. Pyridoxal 5'-phosphate is bound by residues N131 and T371.

Belongs to the threonine synthase family. Cysteate synthase subfamily. In terms of assembly, homotrimer. Pyridoxal 5'-phosphate is required as a cofactor.

The enzyme catalyses O-phospho-L-serine + sulfite + H(+) = L-cysteate + phosphate. It functions in the pathway cofactor biosynthesis; coenzyme M biosynthesis. Functionally, specifically catalyzes the beta-elimination of phosphate from L-phosphoserine and the beta-addition of sulfite to the dehydroalanine intermediate to produce L-cysteate. This is Cysteate synthase from Methanococcoides burtonii (strain DSM 6242 / NBRC 107633 / OCM 468 / ACE-M).